The primary structure comprises 163 residues: Regulatory protein RecX (163 aa).

The interval 1–21 (MSDAEDIPTGRKRRPREQTPV) is disordered.

This sequence belongs to the RecX family.

The protein localises to the cytoplasm. Modulates RecA activity. This Stenotrophomonas maltophilia (strain R551-3) protein is Regulatory protein RecX.